Here is a 191-residue protein sequence, read N- to C-terminus: NADH-quinone oxidoreductase subunit B 2 (191 aa).

Residues C69, C70, C134, and C164 each contribute to the [4Fe-4S] cluster site.

It belongs to the complex I 20 kDa subunit family. NDH-1 is composed of 14 different subunits. Subunits NuoB, C, D, E, F, and G constitute the peripheral sector of the complex. The cofactor is [4Fe-4S] cluster.

It is found in the cell inner membrane. The enzyme catalyses a quinone + NADH + 5 H(+)(in) = a quinol + NAD(+) + 4 H(+)(out). In terms of biological role, NDH-1 shuttles electrons from NADH, via FMN and iron-sulfur (Fe-S) centers, to quinones in the respiratory chain. Couples the redox reaction to proton translocation (for every two electrons transferred, four hydrogen ions are translocated across the cytoplasmic membrane), and thus conserves the redox energy in a proton gradient. This is NADH-quinone oxidoreductase subunit B 2 from Gluconacetobacter diazotrophicus (strain ATCC 49037 / DSM 5601 / CCUG 37298 / CIP 103539 / LMG 7603 / PAl5).